Consider the following 85-residue polypeptide: DNA-directed RNA polymerase subunit omega (85 aa).

The protein belongs to the RNA polymerase subunit omega family. In terms of assembly, the RNAP catalytic core consists of 2 alpha, 1 beta, 1 beta' and 1 omega subunit. When a sigma factor is associated with the core the holoenzyme is formed, which can initiate transcription.

It catalyses the reaction RNA(n) + a ribonucleoside 5'-triphosphate = RNA(n+1) + diphosphate. Its function is as follows. Promotes RNA polymerase assembly. Latches the N- and C-terminal regions of the beta' subunit thereby facilitating its interaction with the beta and alpha subunits. This is DNA-directed RNA polymerase subunit omega from Tropheryma whipplei (strain TW08/27) (Whipple's bacillus).